The primary structure comprises 183 residues: UPF0200 protein MmarC6_1392 (183 aa).

8–15 (GMPGSGKS) contributes to the ATP binding site.

This sequence belongs to the UPF0200 family.

In Methanococcus maripaludis (strain C6 / ATCC BAA-1332), this protein is UPF0200 protein MmarC6_1392.